An 85-amino-acid polypeptide reads, in one-letter code: Translation initiation factor IF-1 2 (85 aa).

In terms of domain architecture, S1-like spans 1–72; sequence MAKEELIEMQ…TKGRITFRHL (72 aa).

It belongs to the IF-1 family. In terms of assembly, component of the 30S ribosomal translation pre-initiation complex which assembles on the 30S ribosome in the order IF-2 and IF-3, IF-1 and N-formylmethionyl-tRNA(fMet); mRNA recruitment can occur at any time during PIC assembly.

The protein resides in the cytoplasm. Its function is as follows. One of the essential components for the initiation of protein synthesis. Stabilizes the binding of IF-2 and IF-3 on the 30S subunit to which N-formylmethionyl-tRNA(fMet) subsequently binds. Helps modulate mRNA selection, yielding the 30S pre-initiation complex (PIC). Upon addition of the 50S ribosomal subunit IF-1, IF-2 and IF-3 are released leaving the mature 70S translation initiation complex. This chain is Translation initiation factor IF-1 2, found in Paracidovorax citrulli (strain AAC00-1) (Acidovorax citrulli).